The sequence spans 200 residues: Glycerol-3-phosphate acyltransferase (200 aa).

5 consecutive transmembrane segments (helical) span residues 1–21 (MLLSSLLLLALGYLLGSMPNG), 53–73 (GPALVVFLLDVGKGALAVLLA), 81–101 (WVQVLAGLAALAGHIWPVWLG), 114–134 (MFLGLAWPVGLACLGLFMAVI), and 139–159 (IVSLSSVVAAIGLPVLMLTSG).

This sequence belongs to the PlsY family. In terms of assembly, probably interacts with PlsX.

It localises to the cell inner membrane. The enzyme catalyses an acyl phosphate + sn-glycerol 3-phosphate = a 1-acyl-sn-glycero-3-phosphate + phosphate. It participates in lipid metabolism; phospholipid metabolism. In terms of biological role, catalyzes the transfer of an acyl group from acyl-phosphate (acyl-PO(4)) to glycerol-3-phosphate (G3P) to form lysophosphatidic acid (LPA). This enzyme utilizes acyl-phosphate as fatty acyl donor, but not acyl-CoA or acyl-ACP. The sequence is that of Glycerol-3-phosphate acyltransferase from Synechococcus sp. (strain CC9902).